We begin with the raw amino-acid sequence, 581 residues long: Arginine--tRNA ligase (581 aa).

The 'HIGH' region motif lies at 126–136 (PNLAKEMHVGH).

This sequence belongs to the class-I aminoacyl-tRNA synthetase family. As to quaternary structure, monomer.

It localises to the cytoplasm. The catalysed reaction is tRNA(Arg) + L-arginine + ATP = L-arginyl-tRNA(Arg) + AMP + diphosphate. The protein is Arginine--tRNA ligase of Shewanella putrefaciens (strain CN-32 / ATCC BAA-453).